We begin with the raw amino-acid sequence, 350 residues long: UPF0284 protein MJ1598 (350 aa).

It belongs to the UPF0284 family.

In Methanocaldococcus jannaschii (strain ATCC 43067 / DSM 2661 / JAL-1 / JCM 10045 / NBRC 100440) (Methanococcus jannaschii), this protein is UPF0284 protein MJ1598.